We begin with the raw amino-acid sequence, 205 residues long: Imidazole glycerol phosphate synthase subunit HisH (205 aa).

Positions 1–205 (MITIVDYQMG…RFATAPVEVA (205 aa)) constitute a Glutamine amidotransferase type-1 domain. The Nucleophile role is filled by Cys79. Active-site residues include His182 and Glu184.

Heterodimer of HisH and HisF.

The protein localises to the cytoplasm. The enzyme catalyses 5-[(5-phospho-1-deoxy-D-ribulos-1-ylimino)methylamino]-1-(5-phospho-beta-D-ribosyl)imidazole-4-carboxamide + L-glutamine = D-erythro-1-(imidazol-4-yl)glycerol 3-phosphate + 5-amino-1-(5-phospho-beta-D-ribosyl)imidazole-4-carboxamide + L-glutamate + H(+). It catalyses the reaction L-glutamine + H2O = L-glutamate + NH4(+). It participates in amino-acid biosynthesis; L-histidine biosynthesis; L-histidine from 5-phospho-alpha-D-ribose 1-diphosphate: step 5/9. IGPS catalyzes the conversion of PRFAR and glutamine to IGP, AICAR and glutamate. The HisH subunit catalyzes the hydrolysis of glutamine to glutamate and ammonia as part of the synthesis of IGP and AICAR. The resulting ammonia molecule is channeled to the active site of HisF. The polypeptide is Imidazole glycerol phosphate synthase subunit HisH (Rhodopirellula baltica (strain DSM 10527 / NCIMB 13988 / SH1)).